The following is a 37-amino-acid chain: Large ribosomal subunit protein bL36c (37 aa).

The protein belongs to the bacterial ribosomal protein bL36 family.

Its subcellular location is the plastid. The protein localises to the chloroplast. This chain is Large ribosomal subunit protein bL36c, found in Lepidium virginicum (Virginia pepperweed).